Reading from the N-terminus, the 278-residue chain is Putative carbamate hydrolase RutD (278 aa).

It belongs to the AB hydrolase superfamily. Hydrolase RutD family.

The enzyme catalyses carbamate + 2 H(+) = NH4(+) + CO2. Its function is as follows. Involved in pyrimidine catabolism. May facilitate the hydrolysis of carbamate, a reaction that can also occur spontaneously. In Yersinia enterocolitica serotype O:8 / biotype 1B (strain NCTC 13174 / 8081), this protein is Putative carbamate hydrolase RutD.